Consider the following 252-residue polypeptide: Biosynthetic peptidoglycan transglycosylase (252 aa).

Residues 23-43 (IGFLLGCIVAGVVAMQVYFFL) form a helical membrane-spanning segment.

It belongs to the glycosyltransferase 51 family.

Its subcellular location is the cell inner membrane. It catalyses the reaction [GlcNAc-(1-&gt;4)-Mur2Ac(oyl-L-Ala-gamma-D-Glu-L-Lys-D-Ala-D-Ala)](n)-di-trans,octa-cis-undecaprenyl diphosphate + beta-D-GlcNAc-(1-&gt;4)-Mur2Ac(oyl-L-Ala-gamma-D-Glu-L-Lys-D-Ala-D-Ala)-di-trans,octa-cis-undecaprenyl diphosphate = [GlcNAc-(1-&gt;4)-Mur2Ac(oyl-L-Ala-gamma-D-Glu-L-Lys-D-Ala-D-Ala)](n+1)-di-trans,octa-cis-undecaprenyl diphosphate + di-trans,octa-cis-undecaprenyl diphosphate + H(+). The protein operates within cell wall biogenesis; peptidoglycan biosynthesis. In terms of biological role, peptidoglycan polymerase that catalyzes glycan chain elongation from lipid-linked precursors. The chain is Biosynthetic peptidoglycan transglycosylase from Cupriavidus pinatubonensis (strain JMP 134 / LMG 1197) (Cupriavidus necator (strain JMP 134)).